Reading from the N-terminus, the 200-residue chain is Claudin-11 (200 aa).

Met-1 is a topological domain (cytoplasmic). Residues 2 to 22 (VATCLQVVGFVTSFVGWIGVI) form a helical membrane-spanning segment. Residues 23-75 (VTTSTNDWVVTCGYTIPTCRKLDELGSKGLWADCVMATGLYHCKPLVDILPCR) lie on the Extracellular side of the membrane. A helical transmembrane segment spans residues 76 to 96 (ALMIAASVLGLPAILLLLTVL). At 97–115 (PCIRMGQEPGVAKYRRAQL) the chain is on the cytoplasmic side. The chain crosses the membrane as a helical span at residues 116–136 (AGVLLILLALCAIVATIWFPV). Over 137–150 (CAHRETTIVSFGYS) the chain is Extracellular. Residues 151-171 (LYAGWIGAVLCLVGGCVILCC) traverse the membrane as a helical segment. The Cytoplasmic portion of the chain corresponds to 172-200 (AGDAQAFGENRFYYTAGSSSPTHAKSAHV). A phosphoserine mark is found at Ser-190 and Ser-191.

This sequence belongs to the claudin family. In terms of assembly, interacts with tetraspanin-3/TSPAN3. Interacts with OCLN.

The protein resides in the cell junction. The protein localises to the tight junction. Its subcellular location is the cell membrane. In terms of biological role, plays a major role in tight junction-specific obliteration of the intercellular space, through calcium-independent cell-adhesion activity. The protein is Claudin-11 (CLDN11) of Pongo abelii (Sumatran orangutan).